The chain runs to 408 residues: Pleckstrin homology domain-containing family O member 1 (408 aa).

The disordered stretch occupies residues 1-21; it reads MKKSGSGKRGPPDGNHQSAAP. Residues 20–131 form the PH domain; it reads APEKVGWVRK…WINALSSAIT (112 aa). The segment at 132–192 is interaction with capping proteins (CPs); sequence RAKNRILDEV…MLTLDLIQEE (61 aa). The interval 135 to 307 is interaction with ATM, CKIP, IFP35 and NMI; the sequence is NRILDEVTVE…PAQPGQLSRI (173 aa). Positions 217 to 264 are disordered; the sequence is LAGSRRRADSDRIQPSSQRASSLSRPWEKPDKGAPYTPQALKKFPSTE. Ser226 is modified (phosphoserine). Over residues 229-240 the composition is skewed to polar residues; it reads IQPSSQRASSLS. 2 positions are modified to phosphoserine: Ser270 and Ser341. The tract at residues 307–408 is negative regulator of AP-1 activity; it reads IQDLVARKLE…QHSQYRKSLM (102 aa). Disordered regions lie at residues 325 to 348 and 389 to 408; these read VQGLGDGKRKAKDPPQSPPDSESE and TPDSHLRQTSQHSQYRKSLM. The span at 389 to 401 shows a compositional bias: polar residues; it reads TPDSHLRQTSQHS.

Heterodimer or homodimer. Interacts with CK2 and actin capping subunits (capping protein CP-alpha and CP-beta). CKIP1 and CK2 together inhibit the activity of actin capping protein at the barbed ends of actin filaments. Interacts with ATM, IFP35, JUN, JUND, NMI and PI3K. Interacts with AKT1, AKT2 and AKT3 (each isozyme of PKB), PtdIns(3,5)P2, PtdIns(4,5)P2 and PtdIns(3,4,5)P2. In terms of processing, C-terminal fragments could be released during apoptosis via caspase-3-dependent cleavage.

The protein resides in the cell membrane. It is found in the nucleus. Its subcellular location is the cytoplasm. Plays a role in the regulation of the actin cytoskeleton through its interactions with actin capping protein (CP). May function to target CK2 to the plasma membrane thereby serving as an adapter to facilitate the phosphorylation of CP by protein kinase 2 (CK2). Appears to target ATM to the plasma membrane. Appears to also inhibit tumor cell growth by inhibiting AKT-mediated cell-survival. Also implicated in PI3K-regulated muscle differentiation, the regulation of AP-1 activity (plasma membrane bound AP-1 regulator that translocates to the nucleus) and the promotion of apoptosis induced by tumor necrosis factor TNF. When bound to PKB, it inhibits it probably by decreasing PKB level of phosphorylation. This Mus musculus (Mouse) protein is Pleckstrin homology domain-containing family O member 1 (Plekho1).